The following is a 628-amino-acid chain: 1,4-alpha-glucan branching enzyme GlgB (628 aa).

Asp-304 serves as the catalytic Nucleophile. The active-site Proton donor is Glu-355.

It belongs to the glycosyl hydrolase 13 family. GlgB subfamily. Monomer.

The enzyme catalyses Transfers a segment of a (1-&gt;4)-alpha-D-glucan chain to a primary hydroxy group in a similar glucan chain.. It functions in the pathway glycan biosynthesis; glycogen biosynthesis. Its function is as follows. Catalyzes the formation of the alpha-1,6-glucosidic linkages in glycogen by scission of a 1,4-alpha-linked oligosaccharide from growing alpha-1,4-glucan chains and the subsequent attachment of the oligosaccharide to the alpha-1,6 position. The chain is 1,4-alpha-glucan branching enzyme GlgB from Streptococcus mutans serotype c (strain ATCC 700610 / UA159).